The chain runs to 350 residues: Probable sugar phosphate/phosphate translocator At4g32390 (350 aa).

Helical transmembrane passes span 15–35 (ILLS…VIVY), 49–69 (FPIT…VILI), 89–109 (VVPI…AYIY), 112–132 (VSFI…IGVL), 146–166 (MLSI…FDTW), 168–188 (VMLQ…IQIL), 205–225 (VAPC…LPIL), 235–255 (FVIF…VFLL), 263–283 (TMNV…WSVI), and 286–306 (TVTP…AYYN). Residues 38–155 (YILDKKMYNW…MLSISFGVAI (118 aa)) form the EamA domain. Residues 324–350 (QGDEEEAGKLLEERESEAAAKRNETED) form a disordered region.

Belongs to the TPT transporter family. TPT (TC 2.A.7.9) subfamily.

Its subcellular location is the membrane. The protein is Probable sugar phosphate/phosphate translocator At4g32390 of Arabidopsis thaliana (Mouse-ear cress).